Here is a 178-residue protein sequence, read N- to C-terminus: Acireductone dioxygenase (178 aa).

Fe(2+) contacts are provided by H81, H83, E87, and H126. H81, H83, E87, and H126 together coordinate Ni(2+).

The protein belongs to the acireductone dioxygenase (ARD) family. Fe(2+) serves as cofactor. Requires Ni(2+) as cofactor.

The protein resides in the cytoplasm. The protein localises to the nucleus. The enzyme catalyses 1,2-dihydroxy-5-(methylsulfanyl)pent-1-en-3-one + O2 = 4-methylsulfanyl-2-oxobutanoate + formate + 2 H(+). The catalysed reaction is 1,2-dihydroxy-5-(methylsulfanyl)pent-1-en-3-one + O2 = 3-(methylsulfanyl)propanoate + CO + formate + 2 H(+). The protein operates within amino-acid biosynthesis; L-methionine biosynthesis via salvage pathway; L-methionine from S-methyl-5-thio-alpha-D-ribose 1-phosphate: step 5/6. Its function is as follows. Catalyzes 2 different reactions between oxygen and the acireductone 1,2-dihydroxy-3-keto-5-methylthiopentene (DHK-MTPene) depending upon the metal bound in the active site. Fe-containing acireductone dioxygenase (Fe-ARD) produces formate and 2-keto-4-methylthiobutyrate (KMTB), the alpha-ketoacid precursor of methionine in the methionine recycle pathway. Ni-containing acireductone dioxygenase (Ni-ARD) produces methylthiopropionate, carbon monoxide and formate, and does not lie on the methionine recycle pathway. The chain is Acireductone dioxygenase (adi1) from Neurospora crassa (strain ATCC 24698 / 74-OR23-1A / CBS 708.71 / DSM 1257 / FGSC 987).